The chain runs to 429 residues: Glutamate-1-semialdehyde 2,1-aminomutase (429 aa).

The residue at position 265 (K265) is an N6-(pyridoxal phosphate)lysine.

Belongs to the class-III pyridoxal-phosphate-dependent aminotransferase family. HemL subfamily. As to quaternary structure, homodimer. Pyridoxal 5'-phosphate is required as a cofactor.

Its subcellular location is the cytoplasm. It catalyses the reaction (S)-4-amino-5-oxopentanoate = 5-aminolevulinate. Its pathway is porphyrin-containing compound metabolism; protoporphyrin-IX biosynthesis; 5-aminolevulinate from L-glutamyl-tRNA(Glu): step 2/2. The polypeptide is Glutamate-1-semialdehyde 2,1-aminomutase (Ectopseudomonas mendocina (strain ymp) (Pseudomonas mendocina)).